The chain runs to 191 residues: Calcium and integrin-binding protein 1 (191 aa).

Gly-2 carries N-myristoyl glycine lipidation. EF-hand domains follow at residues 103-138 (TPDI…LTGE) and 148-183 (EMKQ…SPDF). Ca(2+) is bound by residues Asp-116, Asp-118, Asp-120, Thr-122, Asp-127, Asp-161, Asp-163, Asp-165, Thr-167, and Glu-172.

Monomer. Interacts with the heterodimeric integrin alpha-IIb/beta3 (ITGA2B-ITGB3). Interacts with ITGA2B (via cytoplasmic domain); the interaction is direct and calcium-dependent. Interacts with the protein kinases PLK2/SNK and PRKDC (via the region immediately upstream of the kinase domain). Interacts with PLK3; the interaction inhibits PLK3 kinase activity. Interacts with PSEN2. Interacts (via C-terminus) with F8. Interacts with NBR1 (via C-terminus). Interacts with FEZ1 (via C-terminus). Interacts with UBR5 (via C-terminus); the interaction is sensitive to DNA damage, and may target CIB1 for ubiquitin-mediated degradation. Interacts with IFI6; the interaction is direct. Interacts with BCL2. Interacts with TAS1R2 (via C-terminus); the interaction is independent of the myristoylation state of CIB1. Interacts with ITPR3; the interaction occurs in a calcium dependent manner. Interacts with PTK2/FAK1. Interacts with MAP3K5; the interaction inhibits MAP3K5 activation by phosphorylation, and its subsequent interaction with TRAF2. Interacts (via C-terminal region) with STMN2 (via the N-terminal region); the interaction is direct, occurs in a calcium-dependent manner and attenuates the STMN2-induced neurite outgrowth inhibition. Interacts with SPHK1, the interaction occurs in a calcium-dependent manner. Interacts with ITGA2B (via C-terminal cytoplasmic tail); the interaction occurs upon platelet aggregation and is stabilized/increased in a calcium and magnesium-dependent manner. Interacts with PAK1 (via N-terminal region); the interaction is direct and occurs in a calcium-dependent manner. Interacts with RAC3 (via C-terminal region); the interaction induces their association with the cytoskeleton upon alpha-IIb/beta3 integrin-mediated adhesion. Interacts with ITGA5 and ITGAV. Interacts with MYO1C. Interacts with ITGA2B (via C-terminal cytoplasmic tail region). Interacts (via C-terminal region) with PPP3R1 isoform 1 and isoform 2; the interactions increase upon cardiomyocytes hypertrophy. Interacts with CACNA1C; the interaction increases upon cardiomyocytes hypertrophy. Interacts and forms a complex with TMC6 and TMC8; the interaction stabilizes each component of the complex. Expressed strongly in Sertoli cells, weakly in pachytene spermatocytes, round spermatids and condensing spermatids (at protein level). Expressed in testis. Expressed in cardiac myocytes and endothelial cells. Expressed in heart, liver, spleen, lung, kidney, brain and inner ear. In the inner ear, expressed in the vestibule, basilar membrane and spiral ganglion cells.

The protein localises to the membrane. It localises to the cell membrane. The protein resides in the sarcolemma. It is found in the apical cell membrane. Its subcellular location is the cell projection. The protein localises to the ruffle membrane. It localises to the filopodium tip. The protein resides in the growth cone. It is found in the lamellipodium. Its subcellular location is the cytoplasm. The protein localises to the cytoskeleton. It localises to the microtubule organizing center. The protein resides in the centrosome. It is found in the perinuclear region. Its subcellular location is the nucleus. The protein localises to the neuron projection. It localises to the perikaryon. In terms of biological role, calcium-binding protein that plays a role in the regulation of numerous cellular processes, such as cell differentiation, cell division, cell proliferation, cell migration, thrombosis, angiogenesis, cardiac hypertrophy and apoptosis. Involved in bone marrow megakaryocyte differentiation by negatively regulating thrombopoietin-mediated signaling pathway. Participates in the endomitotic cell cycle of megakaryocyte, a form of mitosis in which both karyokinesis and cytokinesis are interrupted. Plays a role in integrin signaling by negatively regulating alpha-IIb/beta3 activation in thrombin-stimulated megakaryocytes preventing platelet aggregation. Up-regulates PTK2/FAK1 activity, and is also needed for the recruitment of PTK2/FAK1 to focal adhesions; it thus appears to play an important role in focal adhesion formation. Positively regulates cell migration on fibronectin in a CDC42-dependent manner, the effect being negatively regulated by PAK1. Functions as a negative regulator of stress activated MAP kinase (MAPK) signaling pathways. Down-regulates inositol 1,4,5-trisphosphate receptor-dependent calcium signaling. Involved in sphingosine kinase SPHK1 translocation to the plasma membrane in a N-myristoylation-dependent manner preventing TNF-alpha-induced apoptosis. Regulates serine/threonine-protein kinase PLK3 activity for proper completion of cell division progression. Plays a role in microtubule (MT) dynamics during neuronal development; disrupts the MT depolymerization activity of STMN2 attenuating NGF-induced neurite outgrowth and the MT reorganization at the edge of lamellipodia. Promotes cardiomyocyte hypertrophy via activation of the calcineurin/NFAT signaling pathway. Stimulates calcineurin PPP3R1 activity by mediating its anchoring to the sarcolemma. In ischemia-induced (pathological or adaptive) angiogenesis, stimulates endothelial cell proliferation, migration and microvessel formation by activating the PAK1 and ERK1/ERK2 signaling pathway. Also promotes cancer cell survival and proliferation. May regulate cell cycle and differentiation of spermatogenic germ cells, and/or differentiation of supporting Sertoli cells. Forms a complex with TMC6/EVER1 and TMC8/EVER2 in lymphocytes and keratynocytes where CIB1 stabilizes TMC6 and TMC8 levels and reciprocally. This Mus musculus (Mouse) protein is Calcium and integrin-binding protein 1 (Cib1).